An 872-amino-acid chain; its full sequence is MSKQNNRIIPTNRDKKICRKCGYHVCSDHYVANLNKHHEIIKNHNDKINRVNMNDIINIKLLFHILLPRDSFNKDKVISRTHDIVCSLNDDFNNYSSNTNTMNNSKYKNIIKQIFGANTIKQGIYLSSDYQKIIPEKSSNIVFELGEIYYYPVKHKLNLSKYDDISDVESQRHEIEQYVRSSEAGAYEPKKFVNIWIIDMIDTSILGFSNFPWEVVNSCHGIIANRRCFFPEEYGESNYSSFKTFTHHMGHHLGLLHVYNPNHCQSKSCDSSGGSKSIVLDFIIDPLDKINNKKLHIDKEYNPYFTNFMDFTCDKYVSNFTVRQIQEMRFMINKFKPKLNSLLNESQCPIPKYNPETDTISATINFNQRFSNREGSAVPSYEKADNPRMSASQGMINPEIFMGIADPQQPFLKPTVVPTNKNINDLIPNLCGTTLPTRKSGNTQDQIIENIQNVLPSSYMNSEQPKDAYADFKKKYNIIYSEDSYIINHPHNPYLLQQHHQDISAMQQQILEEKNQLRRATIDVPVCGNPYNAGQTVGHYVPPINPEEIDRFNAKRQFAESFNPEMFRPNDPLMYQSPQVDPSCCQKPMDPRLYRPAVPSDPRMGQYMTDPRLFQNGNQTQYQSNPQSNPQFNHQAYSQPNPQAYPQSNPQMYPQQTTFPPRYDPRMNNPYASRATSNGLSPNNVVQQYQSYYDNPSNQQSNQQSNQQSNQQPNQQPNQQPNQQPNQQPNQQSVQQCNQVNQEALNDLRSRNIKASPTVSPGDLINKMNRVNEQLQNIKSSLQQDPDTSTTTRVNTAVGQRSFGVPRVSNDQSKPKFNKFGQPITNSPFVSGNVASTAMSGKITKENISVNPRDASKAPKSRFQRTKPPQAV.

Positions 496–524 (LQQHHQDISAMQQQILEEKNQLRRATIDV) form a coiled coil. 2 disordered regions span residues 595-736 (RPAV…SVQQ) and 844-872 (TKEN…PQAV). 2 stretches are compositionally biased toward polar residues: residues 615–659 (QNGN…QTTF) and 670–686 (PYAS…NNVV). A compositionally biased stretch (low complexity) spans 687 to 736 (QQYQSYYDNPSNQQSNQQSNQQSNQQPNQQPNQQPNQQPNQQPNQQSVQQ).

Its subcellular location is the virion. This is an uncharacterized protein from Acanthamoeba polyphaga mimivirus (APMV).